A 457-amino-acid chain; its full sequence is F-box/LRR-repeat protein At2g42730 (457 aa).

The region spanning 4–50 is the F-box domain; it reads KDVISRLPDEVLGRILSLISTKEAVSTSVLSKRWKNMFVLVSNLDID. LRR repeat units lie at residues 265 to 288, 292 to 315, and 318 to 343; these read MDET…MRNL, IRNV…CKEM, and FDSL…LIKN.

This is F-box/LRR-repeat protein At2g42730 from Arabidopsis thaliana (Mouse-ear cress).